Consider the following 275-residue polypeptide: 2,3,4,5-tetrahydropyridine-2,6-dicarboxylate N-succinyltransferase (275 aa).

Arginine 104 and aspartate 141 together coordinate substrate.

It belongs to the transferase hexapeptide repeat family. In terms of assembly, homotrimer.

The protein localises to the cytoplasm. It catalyses the reaction (S)-2,3,4,5-tetrahydrodipicolinate + succinyl-CoA + H2O = (S)-2-succinylamino-6-oxoheptanedioate + CoA. The protein operates within amino-acid biosynthesis; L-lysine biosynthesis via DAP pathway; LL-2,6-diaminopimelate from (S)-tetrahydrodipicolinate (succinylase route): step 1/3. This Haemophilus influenzae (strain 86-028NP) protein is 2,3,4,5-tetrahydropyridine-2,6-dicarboxylate N-succinyltransferase.